The primary structure comprises 323 residues: tRNA dimethylallyltransferase (323 aa).

An ATP-binding site is contributed by 12–19 (GPTAAGKT). 14–19 (TAAGKT) serves as a coordination point for substrate. Interaction with substrate tRNA regions lie at residues 37–40 (DSAL) and 161–165 (QRLSR).

The protein belongs to the IPP transferase family. As to quaternary structure, monomer. It depends on Mg(2+) as a cofactor.

It catalyses the reaction adenosine(37) in tRNA + dimethylallyl diphosphate = N(6)-dimethylallyladenosine(37) in tRNA + diphosphate. In terms of biological role, catalyzes the transfer of a dimethylallyl group onto the adenine at position 37 in tRNAs that read codons beginning with uridine, leading to the formation of N6-(dimethylallyl)adenosine (i(6)A). The sequence is that of tRNA dimethylallyltransferase from Pseudomonas fluorescens (strain Pf0-1).